The primary structure comprises 238 residues: MGRKWNNIKEKKASKDANTSRIYAKFGREIYVAARQGEPDPELNQALKAVLERAKTYNVPKSIIDRAIEKAKGGSDESYEERRYEGFGPNGAMVIVDALTNNVNRTASDVRAAFGKNGGNMGVSGSVAYMFDRVAVIGFEGKTADEALEILMDADVDAKDIIEEDDTVIVYAEPDQFHAVQEAFRNAGIEEFSVAEFSMIAHNEVTLSEDVQAQFEKMIDAIEDLEDVQQVYHNVDLA.

This sequence belongs to the TACO1 family. YeeN subfamily.

Its subcellular location is the cytoplasm. The protein is Probable transcriptional regulatory protein ABC1956 of Shouchella clausii (strain KSM-K16) (Alkalihalobacillus clausii).